A 437-amino-acid chain; its full sequence is MQVSVENTSALERRMTIAVPAERVENEVNKRLQQTAKRAKIAGFRPGKVPMTVIRQRFEADARQEAFGDLVQASFYEAIVEQKLNPAGAPAVEPKSFEKGKDLEFVAIFEVFPEFTVAGLESIKVERLSAEVADSDLDNMLEVLRKQNTRFEAVERAAQNDDQVNIDFVGKVDGEAFAGGSAKGTLLVLGSGRMIPGFEEGLVGAKAGEERVVNVTFPEDYQNLDLAGKAAEFTITVNSVSAPVLPELNEAFFAQFGIKESTLEGFRAEVRKNMERELRQAIKTKVKNQVMDGLLAANPIEVPKALLENEVNRLRVQAVQQFGGNIKPEQLPVELFEEQAKRRVVLGLIVAEVVKQFELKPDDAKVREMIEEMASAYQEPEQVIAWYYKNDQQLNEVRSVVLEEQVVDTVLQKATVTDKSVSYEEAVKPAEAPAAAE.

The region spanning 161 to 246 (DDQVNIDFVG…VNSVSAPVLP (86 aa)) is the PPIase FKBP-type domain.

This sequence belongs to the FKBP-type PPIase family. Tig subfamily.

It localises to the cytoplasm. It catalyses the reaction [protein]-peptidylproline (omega=180) = [protein]-peptidylproline (omega=0). Its function is as follows. Involved in protein export. Acts as a chaperone by maintaining the newly synthesized protein in an open conformation. Functions as a peptidyl-prolyl cis-trans isomerase. In Pseudomonas putida (strain ATCC 700007 / DSM 6899 / JCM 31910 / BCRC 17059 / LMG 24140 / F1), this protein is Trigger factor.